Reading from the N-terminus, the 549-residue chain is MSMFCFQCQETAGCKGCTVRGVCGKTEDVAKIQDLLIFVTKGLATVANEGRKVGIVDKKVNRMIIDNLFITITNANFDFKAIEKRVKDTLVAREELKERVQAKGGNPIGSDFKGCATWTATTSEEMMEKASQVGVLATENEDIRSLRELIMYGLKGLAAYMEHAMNLGHDKEEVHAFMAETLVKILDDSLSADELTALALETGKFGVDGMALLDEANTSTYGHPEITKVNIGVRNNPGILISGHDLKDLEMLLEQTEGTGVDVYTHGEMLPGHYYPKFKKYAHFAGNYGNAWWLQNKEFASFNGPILMTTNCITPVQDSYRGRIFTTGAVGYEGCIHITADENGYKDFSQIIELAKTCKAPTEIETGEIVGGFAHNQVLALADQVVDAVKSGAIRRFFVMAGCDGRAKSRDYYREFAEKLPKDTVILTAGCAKYKYNKLPLGDINGIPRVLDAGQCNDSYSLVVIALKLAEVFGTDSVNELPISYNIAWYEQKAVIVLLSLLHLGVKNIHLGPTLPAFLSPNVAKVLVENFGIGGITNVEDDMKMFLGE.

[4Fe-4S] cluster-binding residues include C5, C8, C17, and C23. H244, E268, C312, C403, C431, C456, E491, and K493 together coordinate hybrid [4Fe-2O-2S] cluster. C403 is modified (cysteine persulfide).

The protein belongs to the HCP family. Requires [4Fe-4S] cluster as cofactor. Hybrid [4Fe-2O-2S] cluster is required as a cofactor.

It is found in the cytoplasm. It carries out the reaction A + NH4(+) + H2O = hydroxylamine + AH2 + H(+). Its function is as follows. Catalyzes the reduction of hydroxylamine to form NH(3) and H(2)O. The chain is Hydroxylamine reductase from Clostridium perfringens (strain 13 / Type A).